The primary structure comprises 297 residues: MNTIVMQADKKLQEKIRTDLAQHHISNNNPYVVFSAKISGATVLLYTSGKLVFQGSNASHIAQKYGFIEQKESCSSESQDIPIIGTDEVGNGSYFGGLAVVASFVTPKDHAYLKKLGVGDSKTLTDQKIKQIAPLLEKAIPHKALLLSPQKYNQVVSPNNKHNAVSVKVALHNQAIFLLLQDGFEPEKIVIDAFTSSKNYQNYLKNEKNQFKQTITLEEKAENKYLAVAVSSIIARNLFLENLNKLSDDVGYKLPSGAGHQSDKVASQLLKAYGISSLEHCAKLHFANTKKAQALLK.

One can recognise an RNase H type-2 domain in the interval 81-297 (IPIIGTDEVG…NTKKAQALLK (217 aa)). 3 residues coordinate a divalent metal cation: Asp-87, Glu-88, and Asp-192.

This sequence belongs to the RNase HII family. RnhC subfamily. Mn(2+) serves as cofactor. Mg(2+) is required as a cofactor.

It is found in the cytoplasm. The enzyme catalyses Endonucleolytic cleavage to 5'-phosphomonoester.. Functionally, endonuclease that specifically degrades the RNA of RNA-DNA hybrids. The chain is Ribonuclease HIII from Streptococcus agalactiae serotype Ia (strain ATCC 27591 / A909 / CDC SS700).